The chain runs to 584 residues: Alpha-glucosidase MAL12 (584 aa).

The Nucleophile role is filled by aspartate 214. The active-site Proton donor is the glutamate 276.

It belongs to the glycosyl hydrolase 13 family.

It carries out the reaction Hydrolysis of terminal, non-reducing (1-&gt;4)-linked alpha-D-glucose residues with release of alpha-D-glucose.. The sequence is that of Alpha-glucosidase MAL12 (MAL12) from Saccharomyces cerevisiae (strain ATCC 204508 / S288c) (Baker's yeast).